The primary structure comprises 367 residues: Choline-phosphate cytidylyltransferase A (367 aa).

Met1 carries the post-translational modification N-acetylmethionine. The segment at 1 to 33 is disordered; the sequence is MDAQCSAKVNARKRRKEAPGPNGATEEDGVPSK. Lys8 is modified (N6-acetyllysine). CTP is bound by residues Ile84, Phe85, His92, and Lys122. Lys122 and Trp151 together coordinate phosphocholine. 7 residues coordinate CTP: His168, Asp169, Tyr173, Gln195, Arg196, Thr197, and Ile200. Amphipathic stretches follow at residues 228–287 and 298–315; these read KELN…EFIG and ALKHMLKEGKGRMLQAIS. A Phosphoserine modification is found at Ser233. An autoinhibitory (AI) region spans residues 272–293; the sequence is IDLIQKWEEKSREFIGSFLEMF. The interval 313 to 367 is disordered; it reads AISPKQSPSSSPTRERSPSPSFRWPFSGKTSPPCSPANLSRHKAAAYDISEDEED. Phosphoserine occurs at positions 315, 319, 321, 322, and 323. Repeat unit 1 spans residues 319-324; that stretch reads SPSSSP. The segment covering 319-339 has biased composition (low complexity); that stretch reads SPSSSPTRERSPSPSFRWPFS. Thr325 carries the post-translational modification Phosphothreonine. Phosphoserine occurs at positions 329, 331, and 333. The 2; approximate repeat unit spans residues 329–333; the sequence is SPSPS. Position 342 is a phosphothreonine (Thr342). Phosphoserine is present on residues Ser343, Ser347, Ser352, and Ser362. The stretch at 343–348 is repeat 3; that stretch reads SPPCSP.

This sequence belongs to the cytidylyltransferase family. Homodimer. The serine residues of the C-terminus are phosphorylated. The inactive soluble form is stabilized by phosphorylation, the active membrane bound form is promoted by anionic lipids or diacylglycerol, and is stabilized by dephosphorylation. Post-translationally, monoubiquitinated by the SCF(FBXL2) complex, leading to proteasomal degradation. As to expression, brain, placenta, liver, fetal and adult lung.

Its subcellular location is the cytoplasm. The protein resides in the cytosol. It localises to the membrane. The protein localises to the endoplasmic reticulum membrane. It is found in the nucleus. It carries out the reaction phosphocholine + CTP + H(+) = CDP-choline + diphosphate. Its pathway is phospholipid metabolism; phosphatidylcholine biosynthesis; phosphatidylcholine from phosphocholine: step 1/2. Interconverts between an inactive cytosolic form and an active membrane-bound form. Activation involves disruption of an inhibitory interaction between helices at the base of the active site and the autoinhibitory (AI) region. Activated by anionic lipid vesicles and by oleic acid or diacylglycerol-containing phosphatidylcholine vesicles. Functionally, catalyzes the key rate-limiting step in the CDP-choline pathway for phosphatidylcholine biosynthesis. In Homo sapiens (Human), this protein is Choline-phosphate cytidylyltransferase A (PCYT1A).